The chain runs to 504 residues: Maturase K (504 aa).

This sequence belongs to the intron maturase 2 family. MatK subfamily.

The protein resides in the plastid. It localises to the chloroplast. Functionally, usually encoded in the trnK tRNA gene intron. Probably assists in splicing its own and other chloroplast group II introns. The chain is Maturase K from Capsella bursa-pastoris (Shepherd's purse).